The sequence spans 190 residues: Xanthine phosphoribosyltransferase 1 (190 aa).

Xanthine is bound by residues L20 and N27. Position 129 to 133 (129 to 133) interacts with 5-phospho-alpha-D-ribose 1-diphosphate; the sequence is AQGCA. K157 provides a ligand contact to xanthine.

The protein belongs to the purine/pyrimidine phosphoribosyltransferase family. Xpt subfamily. As to quaternary structure, homodimer.

The protein resides in the cytoplasm. It catalyses the reaction XMP + diphosphate = xanthine + 5-phospho-alpha-D-ribose 1-diphosphate. The protein operates within purine metabolism; XMP biosynthesis via salvage pathway; XMP from xanthine: step 1/1. Functionally, converts the preformed base xanthine, a product of nucleic acid breakdown, to xanthosine 5'-monophosphate (XMP), so it can be reused for RNA or DNA synthesis. In Clostridium perfringens (strain ATCC 13124 / DSM 756 / JCM 1290 / NCIMB 6125 / NCTC 8237 / Type A), this protein is Xanthine phosphoribosyltransferase 1.